Consider the following 461-residue polypeptide: MRVLIKNGTVVNADGQAKQDLLIESGIVRQLGNNISPQLPYEEIDATGCYVFPGGVDVHTHFNIDVGIARSCDDFFTGTRAAACGGTTTIIDHMGFGPNGCRLRHQLEVYRGYAAHKAVIDYSFHGVIQHINHAILDEIPMMVEEGLSSFKLYLTYQYKLNDDEVLQALRRLHESGALTTVHPENDAAIASKRAEFIAAGLTAPRYHALSRPLECEAEAIARMINLAQIAGNAPLYIVHLSNGLGLDYLRLARANHQPVWVETCPQYLLLDERSYDTEDGMKFILSPPLRNVREQDKLWCGISDGAIDVVATDHCTFSMAQRLQISKGDFSRCPNGLPGVENRMQLLFSSGVMTGRISPERFVELTSAMPARLFGLWPQKGLLAPGSDGDVVIIDPRQSQQIQHRHLHDNADYSPWEGFTCQGAIVRTLSRGETIFCDGTFTGKAGRGRFLRRKPFVPPVL.

A divalent metal cation contacts are provided by H59, H61, and K151. K151 is modified (N6-carboxylysine). Position 156 (Y156) interacts with substrate. The a divalent metal cation site is built by H182 and H239. S286 provides a ligand contact to substrate. D313 contacts a divalent metal cation. Position 335 (N335) interacts with substrate.

The protein belongs to the metallo-dependent hydrolases superfamily. Hydantoinase/dihydropyrimidinase family. Homotetramer. Requires a divalent metal cation as cofactor. Post-translationally, carboxylation allows a single lysine to coordinate two divalent metal cations.

It catalyses the reaction D-5-phenylhydantoin + H2O = N-carbamoyl-D-phenylglycine + H(+). Catalyzes the stereospecific hydrolysis of the cyclic amide bond of D-hydantoin derivatives with an aromatic side chains at the 5'-position. Has no activity on dihydropyrimidines. The physiological function is unknown. The chain is D-phenylhydantoinase from Escherichia coli O7:K1 (strain IAI39 / ExPEC).